Here is a 377-residue protein sequence, read N- to C-terminus: Peroxisomal membrane protein PEX14 (377 aa).

Low complexity predominate over residues 1-20; the sequence is MASSEQAEQPSQPSSSPGSE. Residues 1–23 form a disordered region; it reads MASSEQAEQPSQPSSSPGSENVV. Ala2 is modified (N-acetylalanine). Topologically, residues 2-108 are peroxisomal; that stretch reads ASSEQAEQPS…CSPGSSRWRD (107 aa). Lys34 carries the post-translational modification N6-acetyllysine. The helical transmembrane segment at 109–126 threads the bilayer; sequence YGALAIIMAGIAFGFHQL. At 127-377 the chain is on the cytoplasmic side; that stretch reads YKKYLLPLIL…EGASNESERH (251 aa). Residues 230–377 form a disordered region; sequence PPSPSAPKIP…EGASNESERH (148 aa). Ser232 bears the Phosphoserine mark. Low complexity-rich tracts occupy residues 244-259 and 265-275; these read PVKS…VNHH and SPVSNESTSSS. Residues Ser282 and Ser335 each carry the phosphoserine modification. Residues 323–342 are compositionally biased toward acidic residues; it reads KEEEEEEEEEDVSHVDEEDV. A compositionally biased stretch (basic and acidic residues) spans 360-377; that stretch reads QVDKLRRPEGASNESERH.

The protein belongs to the peroxin-14 family. Interacts with PEX13; forming the PEX13-PEX14 docking complex. Interacts with PEX5 (via WxxxF/Y motifs). Interacts with PEX19. Interacts with tubulin.

It localises to the peroxisome membrane. Component of the PEX13-PEX14 docking complex, a translocon channel that specifically mediates the import of peroxisomal cargo proteins bound to PEX5 receptor. The PEX13-PEX14 docking complex forms a large import pore which can be opened to a diameter of about 9 nm. Mechanistically, PEX5 receptor along with cargo proteins associates with the PEX14 subunit of the PEX13-PEX14 docking complex in the cytosol, leading to the insertion of the receptor into the organelle membrane with the concomitant translocation of the cargo into the peroxisome matrix. Plays a key role for peroxisome movement through a direct interaction with tubulin. This chain is Peroxisomal membrane protein PEX14, found in Cricetulus longicaudatus (Long-tailed dwarf hamster).